The sequence spans 62 residues: Large ribosomal subunit protein uL30 (62 aa).

It belongs to the universal ribosomal protein uL30 family. In terms of assembly, part of the 50S ribosomal subunit.

The chain is Large ribosomal subunit protein uL30 from Geobacillus kaustophilus (strain HTA426).